The sequence spans 575 residues: MSGEWGHLGQTLIWAVWVLAAATEGPAADAPVRSTRLGWVRGKQATVLGSTMPVNVFLGIPFAAPPLGPLRFKRPKPALLWNDSRDATSYPKLCLQNSVWLLSDQHFLKVHYPNLEVSEDCLYLNIYAPAHANTGSKLPVMVWFPGGAFETGSASIFDGSALAAYEDVLIVTTQYRLGIFGFFKTGDQHAPGNWAFLDQLAALTWVQENIEFFGGDPHSVTIFGESAGAISVSGLVLSPMASGLFHKAIMESGVAIIPFLRAPDDERNEDLQVIARICGCNVSDSVALLQCLRAKSSEELLDINKKTKSFTRVVDGFFFPDEPLDLLTEKTFNSIPSVIGVNNHECGFLLPMKEFPEILGGSNKSLALHLIHRVLHIPNQYLYLVADQYFYNKHSPVEIRDSFLDLLGDVFFVVPGVVTARYHRDAGAPVYFYEFQHPPECLKDTRPAFVKADHSDEIRFVFGGAFLKGNIVMFEGATEEEKLLSRKMMRYWANFARTGDPNGEGLPLWPAYSQSEQYLKLDLNISVGQKLKEQEVEFWSDTLPLIMSMSTAPPGPPVPLLSLSVLLPFLFSSAP.

An N-terminal signal peptide occupies residues 1 to 27; sequence MSGEWGHLGQTLIWAVWVLAAATEGPA. The N-linked (GlcNAc...) asparagine glycan is linked to Asn-82. Cys-94 and Cys-121 are oxidised to a cystine. Ser-226 acts as the Acyl-ester intermediate in catalysis. Cys-280 and Cys-291 are joined by a disulfide. Residue Asn-281 is glycosylated (N-linked (GlcNAc...) asparagine). Glu-345 functions as the Charge relay system in the catalytic mechanism. Asn-363 carries N-linked (GlcNAc...) asparagine glycosylation. His-454 functions as the Charge relay system in the catalytic mechanism. Asn-524 carries an N-linked (GlcNAc...) asparagine glycan.

The protein belongs to the type-B carboxylesterase/lipase family. Post-translationally, N-glycosylated.

It localises to the secreted. The enzyme catalyses a carboxylic ester + H2O = an alcohol + a carboxylate + H(+). In terms of biological role, involved in the detoxification of xenobiotics and in the activation of ester and amide prodrugs. In Canis lupus familiaris (Dog), this protein is Carboxylesterase 5A (CES5A).